Here is a 464-residue protein sequence, read N- to C-terminus: Chromosomal replication initiator protein DnaA (464 aa).

Residues 1–90 (MNNDNTEVLE…KYWQDEDQSI (90 aa)) are domain I, interacts with DnaA modulators. The segment at 90–126 (ICSVDICVVSNQDPNLLVDIKDRVDRGIKGNCDNVSS) is domain II. Positions 127–345 (PLDPRFTFDN…GALNKVVAHS (219 aa)) are domain III, AAA+ region. Positions 173, 175, 176, and 177 each coordinate ATP. The interval 346 to 464 (SLVGCSITLD…DINLLNRMLR (119 aa)) is domain IV, binds dsDNA.

It belongs to the DnaA family. Oligomerizes as a right-handed, spiral filament on DNA at oriC.

Its subcellular location is the cytoplasm. In terms of biological role, plays an essential role in the initiation and regulation of chromosomal replication. ATP-DnaA binds to the origin of replication (oriC) to initiate formation of the DNA replication initiation complex once per cell cycle. Binds the DnaA box (a 9 base pair repeat at the origin) and separates the double-stranded (ds)DNA. Forms a right-handed helical filament on oriC DNA; dsDNA binds to the exterior of the filament while single-stranded (ss)DNA is stabiized in the filament's interior. The ATP-DnaA-oriC complex binds and stabilizes one strand of the AT-rich DNA unwinding element (DUE), permitting loading of DNA polymerase. After initiation quickly degrades to an ADP-DnaA complex that is not apt for DNA replication. Binds acidic phospholipids. The protein is Chromosomal replication initiator protein DnaA of Ehrlichia ruminantium (strain Gardel).